We begin with the raw amino-acid sequence, 138 residues long: Cysteine desulfuration protein SufE (138 aa).

Cys-51 (cysteine persulfide intermediate) is an active-site residue.

The protein belongs to the SufE family. Homodimer. Interacts with SufS.

It localises to the cytoplasm. The protein operates within cofactor biosynthesis; iron-sulfur cluster biosynthesis. Functionally, participates in cysteine desulfuration mediated by SufS. Cysteine desulfuration mobilizes sulfur from L-cysteine to yield L-alanine and constitutes an essential step in sulfur metabolism for biosynthesis of a variety of sulfur-containing biomolecules. Functions as a sulfur acceptor for SufS, by mediating the direct transfer of the sulfur atom from the S-sulfanylcysteine of SufS, an intermediate product of cysteine desulfuration process. The polypeptide is Cysteine desulfuration protein SufE (Escherichia coli O45:K1 (strain S88 / ExPEC)).